The following is a 240-amino-acid chain: Peptidyl-tRNA hydrolase 2 (240 aa).

Residue Tyr-60 coordinates tRNA. The active-site Proton acceptor is the His-65. TRNA-binding residues include Tyr-111, Asn-113, and Asn-159.

Belongs to the PTH family. As to quaternary structure, monomer.

It is found in the cytoplasm. The catalysed reaction is an N-acyl-L-alpha-aminoacyl-tRNA + H2O = an N-acyl-L-amino acid + a tRNA + H(+). Hydrolyzes ribosome-free peptidyl-tRNAs (with 1 or more amino acids incorporated), which drop off the ribosome during protein synthesis, or as a result of ribosome stalling. In terms of biological role, catalyzes the release of premature peptidyl moieties from peptidyl-tRNA molecules trapped in stalled 50S ribosomal subunits, and thus maintains levels of free tRNAs and 50S ribosomes. The sequence is that of Peptidyl-tRNA hydrolase 2 from Corynebacterium jeikeium (strain K411).